A 347-amino-acid polypeptide reads, in one-letter code: Quinolinate synthase (347 aa).

H47 and S68 together coordinate iminosuccinate. A [4Fe-4S] cluster-binding site is contributed by C113. Iminosuccinate contacts are provided by residues 139–141 (YAN) and S156. C200 is a [4Fe-4S] cluster binding site. Iminosuccinate-binding positions include 226–228 (HPE) and T243. C297 contributes to the [4Fe-4S] cluster binding site.

It belongs to the quinolinate synthase family. Type 1 subfamily. Requires [4Fe-4S] cluster as cofactor.

Its subcellular location is the cytoplasm. It carries out the reaction iminosuccinate + dihydroxyacetone phosphate = quinolinate + phosphate + 2 H2O + H(+). It functions in the pathway cofactor biosynthesis; NAD(+) biosynthesis; quinolinate from iminoaspartate: step 1/1. Catalyzes the condensation of iminoaspartate with dihydroxyacetone phosphate to form quinolinate. This is Quinolinate synthase from Salmonella gallinarum (strain 287/91 / NCTC 13346).